Here is a 279-residue protein sequence, read N- to C-terminus: Undecaprenyl-diphosphatase (279 aa).

A run of 7 helical transmembrane segments spans residues 10–30 (FICF…FLPI), 48–68 (LGVS…IYYF), 96–116 (LFIY…LIKL), 128–148 (GLFS…LSEI), 203–223 (SFLV…FSLF), 229–249 (IDII…IFAI), and 259–279 (NNTL…LTTL).

The protein belongs to the UppP family.

It is found in the cell inner membrane. It catalyses the reaction di-trans,octa-cis-undecaprenyl diphosphate + H2O = di-trans,octa-cis-undecaprenyl phosphate + phosphate + H(+). Functionally, catalyzes the dephosphorylation of undecaprenyl diphosphate (UPP). Confers resistance to bacitracin. In Prochlorococcus marinus (strain NATL1A), this protein is Undecaprenyl-diphosphatase.